The chain runs to 321 residues: MSQQNQTEYLDFELPIAELEAKIESLRSVTDQDSKIDLDDEIKRLQKKTAELTKKTFADLDAWQVSRMARHPNRPYTLDYISRIFTEFEELAGDRAFADDKAIVGGLARLDGRPVMVIGHQKGRSVKEKVLRNFGMPAPEGYRKALRLMQMAERFRLPIITFIDTPGAYPGVGAEERGQSEAIARNLREMSTLTVPVICTVIGEGGSGGALAIGVGDKVNMLQYSTYSVISPEGCASILWKSAEKASTAAEVMGLTASRLKELELIDNIVTEPLGGAHRQYDEMAQALKQRILSDLEDLDILDKETLLDRRYQRLMNYGYV.

The CoA carboxyltransferase C-terminal domain occupies 37–298 (DLDDEIKRLQ…KQRILSDLED (262 aa)).

Belongs to the AccA family. Acetyl-CoA carboxylase is a heterohexamer composed of biotin carboxyl carrier protein (AccB), biotin carboxylase (AccC) and two subunits each of ACCase subunit alpha (AccA) and ACCase subunit beta (AccD).

Its subcellular location is the cytoplasm. The enzyme catalyses N(6)-carboxybiotinyl-L-lysyl-[protein] + acetyl-CoA = N(6)-biotinyl-L-lysyl-[protein] + malonyl-CoA. Its pathway is lipid metabolism; malonyl-CoA biosynthesis; malonyl-CoA from acetyl-CoA: step 1/1. In terms of biological role, component of the acetyl coenzyme A carboxylase (ACC) complex. First, biotin carboxylase catalyzes the carboxylation of biotin on its carrier protein (BCCP) and then the CO(2) group is transferred by the carboxyltransferase to acetyl-CoA to form malonyl-CoA. The polypeptide is Acetyl-coenzyme A carboxylase carboxyl transferase subunit alpha (Mannheimia succiniciproducens (strain KCTC 0769BP / MBEL55E)).